Here is a 232-residue protein sequence, read N- to C-terminus: DnaJ homolog subfamily B member 8 (232 aa).

The region spanning 3-69 (NYYEVLGVQA…KKRSLYDRAG (67 aa)) is the J domain.

As to quaternary structure, interacts with histone deacetylases HDAC4, HDAC6, and SIRT2, HDAC activity is required for antiaggregation.

In terms of biological role, efficient suppressor of aggregation and toxicity of disease-associated polyglutamine proteins. The chain is DnaJ homolog subfamily B member 8 (DNAJB8) from Homo sapiens (Human).